The chain runs to 382 residues: Beta-1,4-galactosyltransferase 6 (382 aa).

Residues methionine 1–leucine 15 are Cytoplasmic-facing. The helical; Signal-anchor for type II membrane protein transmembrane segment at isoleucine 16–alanine 35 threads the bilayer. The Lumenal segment spans residues proline 36–tyrosine 382. 6 N-linked (GlcNAc...) asparagine glycosylation sites follow: asparagine 71, asparagine 75, asparagine 83, asparagine 84, asparagine 99, and asparagine 122. An intrachain disulfide couples cysteine 108 to cysteine 152. Residues proline 163–arginine 167, phenylalanine 202–arginine 204, valine 229–aspartate 230, tyrosine 258, and tryptophan 290 each bind UDP-alpha-D-galactose. A disulfide bridge connects residues cysteine 223 and cysteine 242. Position 230 (aspartate 230) interacts with Mn(2+). Glycine 292–aspartate 295 is a binding site for N-acetyl-D-glucosamine. Asparagine 307 carries an N-linked (GlcNAc...) asparagine glycan. Histidine 323 serves as a coordination point for Mn(2+). Histidine 323–histidine 324 is a UDP-alpha-D-galactose binding site. Arginine 334 provides a ligand contact to N-acetyl-D-glucosamine. Asparagine 367 is a glycosylation site (N-linked (GlcNAc...) asparagine).

This sequence belongs to the glycosyltransferase 7 family. The cofactor is Mn(2+). Mg(2+) is required as a cofactor. Ca(2+) serves as cofactor. In terms of tissue distribution, highest expression in brain with lower levels found in lungs, heart, skeletal muscle and kidney. Lowest expression in testis, liver and spleen.

It is found in the golgi apparatus. Its subcellular location is the golgi stack membrane. It carries out the reaction a beta-D-glucosyl-(1&lt;-&gt;1')-N-acylsphing-4-enine + UDP-alpha-D-galactose = a beta-D-Gal-(1-&gt;4)-beta-D-Glc-(1&lt;-&gt;1)-Cer(d18:1(4E)) + UDP + H(+). It participates in protein modification; protein glycosylation. The protein operates within sphingolipid metabolism. Its activity is regulated as follows. Inhibited by EDTA. Its function is as follows. Catalyzes the synthesis of lactosylceramide (LacCer) via the transfer of galactose from UDP-galactose to glucosylceramide (GlcCer). LacCer is the starting point in the biosynthesis of all gangliosides (membrane-bound glycosphingolipids) which play pivotal roles in the CNS including neuronal maturation and axonal and myelin formation. In Rattus norvegicus (Rat), this protein is Beta-1,4-galactosyltransferase 6.